We begin with the raw amino-acid sequence, 207 residues long: MKVQVLNLDGTAGKGEVELSDDVFGLEPRADILHRVVTWQLENRRGIARKARERSDVARTGKKFGRQKGGGTARHGDRKAPIFIGGGKAHGPRVREFNISLNKKVRALGLKMALSSKAKAGLVVVDNLDVDAKTKALVGQLAKANWGKKVLVIDGEGVNDNFAKAARNIVGVNVLPAIGANVYDILKHDTLVLTRAAVEKLEARFNG.

The disordered stretch occupies residues 53-85 (ERSDVARTGKKFGRQKGGGTARHGDRKAPIFIG).

The protein belongs to the universal ribosomal protein uL4 family. Part of the 50S ribosomal subunit.

In terms of biological role, one of the primary rRNA binding proteins, this protein initially binds near the 5'-end of the 23S rRNA. It is important during the early stages of 50S assembly. It makes multiple contacts with different domains of the 23S rRNA in the assembled 50S subunit and ribosome. Forms part of the polypeptide exit tunnel. This chain is Large ribosomal subunit protein uL4, found in Novosphingobium aromaticivorans (strain ATCC 700278 / DSM 12444 / CCUG 56034 / CIP 105152 / NBRC 16084 / F199).